Here is a 558-residue protein sequence, read N- to C-terminus: Germacrene A synthase short form (558 aa).

Positions 311, 315, 455, 459, and 463 each coordinate Mg(2+). The DDXXD motif motif lies at 311–315; it reads DDTYD.

The protein belongs to the terpene synthase family. Mg(2+) serves as cofactor. Expressed in roots and in green and etiolated seedlings.

It carries out the reaction (2E,6E)-farnesyl diphosphate = (+)-(R)-germacrene A + diphosphate. It participates in secondary metabolite biosynthesis; terpenoid biosynthesis. In terms of biological role, involved in sesquiterpene lactone biosynthesis. Produces exclusively (+)-germacrene A. In Cichorium intybus (Chicory), this protein is Germacrene A synthase short form.